Reading from the N-terminus, the 475-residue chain is Aspartyl/glutamyl-tRNA(Asn/Gln) amidotransferase subunit B (475 aa).

Belongs to the GatB/GatE family. GatB subfamily. In terms of assembly, heterotrimer of A, B and C subunits.

It carries out the reaction L-glutamyl-tRNA(Gln) + L-glutamine + ATP + H2O = L-glutaminyl-tRNA(Gln) + L-glutamate + ADP + phosphate + H(+). The catalysed reaction is L-aspartyl-tRNA(Asn) + L-glutamine + ATP + H2O = L-asparaginyl-tRNA(Asn) + L-glutamate + ADP + phosphate + 2 H(+). Its function is as follows. Allows the formation of correctly charged Asn-tRNA(Asn) or Gln-tRNA(Gln) through the transamidation of misacylated Asp-tRNA(Asn) or Glu-tRNA(Gln) in organisms which lack either or both of asparaginyl-tRNA or glutaminyl-tRNA synthetases. The reaction takes place in the presence of glutamine and ATP through an activated phospho-Asp-tRNA(Asn) or phospho-Glu-tRNA(Gln). This Chlorobium chlorochromatii (strain CaD3) protein is Aspartyl/glutamyl-tRNA(Asn/Gln) amidotransferase subunit B.